The following is a 143-amino-acid chain: Peptide methionine sulfoxide reductase MsrB (143 aa).

A MsrB domain is found at 5–127; sequence NEELKKKLTP…NSAALRFIPK (123 aa). The active-site Nucleophile is Cys116.

This sequence belongs to the MsrB Met sulfoxide reductase family.

It carries out the reaction L-methionyl-[protein] + [thioredoxin]-disulfide + H2O = L-methionyl-(R)-S-oxide-[protein] + [thioredoxin]-dithiol. This chain is Peptide methionine sulfoxide reductase MsrB, found in Halalkalibacterium halodurans (strain ATCC BAA-125 / DSM 18197 / FERM 7344 / JCM 9153 / C-125) (Bacillus halodurans).